The sequence spans 484 residues: Cobyric acid synthase (484 aa).

Residues 251 to 438 (ALKVAVPVLS…LHGLFGSDAY (188 aa)) form the GATase cobBQ-type domain. Cys333 serves as the catalytic Nucleophile. Residue His430 is part of the active site.

The protein belongs to the CobB/CobQ family. CobQ subfamily.

It participates in cofactor biosynthesis; adenosylcobalamin biosynthesis. Its function is as follows. Catalyzes amidations at positions B, D, E, and G on adenosylcobyrinic A,C-diamide. NH(2) groups are provided by glutamine, and one molecule of ATP is hydrogenolyzed for each amidation. This Sinorhizobium fredii (strain NBRC 101917 / NGR234) protein is Cobyric acid synthase.